The primary structure comprises 234 residues: MLRYPYFCRMYKECLSCWLESGIPNLGVWPKRIHTTAEKYREYEAREQTDQTQVQELHRSQDRDFETMAKLHIPVMVDEVVHCLSPQKGQIFLDMTFGSGGHTKAILQKESDIVLYALDRDPTAYALAEHLSELYPKQIRAMLGQFSQAEALLMKAGVQPGTFDGVLMDLGCSSMQLDTPERGSSLRKDGPLDIRMDGGRNISSLCYLYTERLTTAIYLYCHQDFPGSSHICEQ.

Residues 100–102 (GGH), D119, F146, D169, and Q176 contribute to the S-adenosyl-L-methionine site.

This sequence belongs to the methyltransferase superfamily. RsmH family.

Its function is as follows. Probable S-adenosyl-L-methionine-dependent methyltransferase. This chain is Putative methyltransferase-like protein 15P1 (METTL15P1), found in Homo sapiens (Human).